A 612-amino-acid chain; its full sequence is E3 ubiquitin-protein ligase synoviolin (612 aa).

Over methionine 1–threonine 4 the chain is Cytoplasmic. The interval methionine 1 to alanine 251 is involved in FAM8A1 interaction. The chain crosses the membrane as a helical span at residues alanine 5–leucine 25. Residues histidine 21–serine 42 are interaction with SEL1L. Over lysine 26 to proline 41 the chain is Lumenal. Residues serine 42–glycine 62 form a helical membrane-spanning segment. At lysine 63 to aspartate 98 the chain is on the cytoplasmic side. The helical transmembrane segment at phenylalanine 99–leucine 119 threads the bilayer. Residues alanine 120–arginine 140 lie on the Lumenal side of the membrane. Residues isoleucine 141–histidine 161 traverse the membrane as a helical segment. Topologically, residues serine 162–serine 169 are cytoplasmic. A helical transmembrane segment spans residues valine 170–isoleucine 190. At lysine 191–valine 224 the chain is on the lumenal side. The chain crosses the membrane as a helical span at residues leucine 225–isoleucine 245. Residues lysine 236 to arginine 270 are interaction with p53/TP53. Residues arginine 246–histidine 612 are Cytoplasmic-facing. Cysteine 291, cysteine 294, cysteine 307, histidine 309, histidine 312, cysteine 315, cysteine 326, and cysteine 329 together coordinate Zn(2+). An RING-type; atypical zinc finger spans residues cysteine 291–arginine 330. 2 disordered regions span residues serine 337–proline 375 and proline 393–proline 449. Pro residues-rich tracts occupy residues glutamine 341–proline 375 and proline 393–threonine 409. Low complexity predominate over residues proline 416–proline 434. Pro residues predominate over residues glycine 435–proline 449. Residues glycine 474 to arginine 529 form an HAF-H domain; necessary to form higher-order Hrd1 complexes region. The interval proline 530–histidine 612 is disordered. Positions glutamate 539–proline 559 are enriched in low complexity. A compositionally biased stretch (pro residues) spans threonine 560–proline 570. A compositionally biased stretch (acidic residues) spans glutamate 586 to alanine 595. Serine 608 bears the Phosphoserine mark.

Belongs to the HRD1 family. In terms of assembly, homodimer. Interacts with p53/TP53. Interacts with HTT. Component of the HRD1 complex, which comprises at least SYNV1/HRD1, DERL1/2, FAM8A1, HERPUD1/HERP, OS9, SEL1L and UBE2J1. FAM8A1 is stabilized by interaction with SYNV1, which prevents its proteasomal degradation. OS9 and UBE2J1 recruitment to the complex may be mediated by SEL1L. SYNV1 assembles with SEL1L and FAM8A1 through its transmembrane domains, but interaction with its cytoplasmic domain is required to confer stability to FAM8A1 and enhance recruitment of HERPUD1. The HRD1 complex also associates with VIMP and may transfer misfolded proteins from the endoplasmic reticulum to VCP. May form a complex with ERLEC1; HSPA5; OS9 and SEL1L. Interacts with VCP. Interacts with UBXN6. Interacts with BAG6. Interacts with NFE2L1. Interacts (via N-terminus) with components of the pre-B cell receptor, including IGLL1 and VPREB1A. Interacts with CREB3L3; this interaction leads to CREB3L3 ubiquitination and proteasomal degradation. In terms of processing, auto-ubiquitinated. Deubiquitinated by USP19. Widely expressed, with highest levels in bone, spleen, lung and testis. In the brain, present in neurons but not in glial cells. Up-regulated in synovial tissues from mice with collagen-induced arthritis (at protein level). Expressed in the liver.

It is found in the endoplasmic reticulum membrane. The catalysed reaction is S-ubiquitinyl-[E2 ubiquitin-conjugating enzyme]-L-cysteine + [acceptor protein]-L-lysine = [E2 ubiquitin-conjugating enzyme]-L-cysteine + N(6)-ubiquitinyl-[acceptor protein]-L-lysine.. Its pathway is protein modification; protein ubiquitination. Its function is as follows. E3 ubiquitin-protein ligase which accepts ubiquitin specifically from endoplasmic reticulum-associated UBC7 E2 ligase and transfers it to substrates, promoting their degradation. Component of the endoplasmic reticulum quality control (ERQC) system also called ER-associated degradation (ERAD) involved in ubiquitin-dependent degradation of misfolded endoplasmic reticulum proteins. Also promotes the degradation of normal but naturally short-lived proteins such as SGK. Protects cells from ER stress-induced apoptosis. Sequesters p53/TP53 in the cytoplasm and promotes its degradation, thereby negatively regulating its biological function in transcription, cell cycle regulation and apoptosis. Required for embryogenesis. Mediates the ubiquitination and subsequent degradation of cytoplasmic NFE2L1. During the early stage of B cell development, required for degradation of the pre-B cell receptor (pre-BCR) complex, hence supporting further differentiation into mature B cells. In Mus musculus (Mouse), this protein is E3 ubiquitin-protein ligase synoviolin (Syvn1).